The sequence spans 204 residues: Holliday junction branch migration complex subunit RuvA (204 aa).

The segment at 1–65 (MIGRLRGAVA…SAGLRLYGFG (65 aa)) is domain I. Residues 66 to 142 (TREDRRAFVL…PITDGPVLMT (77 aa)) form a domain II region. Residues 143–152 (APGAVAAAPA) form a flexible linker region. The tract at residues 152–204 (AKAAPTGDAVAALMGLGVAEVNARRVVEAAAAKLGDEATVQALIKAGLQELGR) is domain III.

This sequence belongs to the RuvA family. In terms of assembly, homotetramer. Forms an RuvA(8)-RuvB(12)-Holliday junction (HJ) complex. HJ DNA is sandwiched between 2 RuvA tetramers; dsDNA enters through RuvA and exits via RuvB. An RuvB hexamer assembles on each DNA strand where it exits the tetramer. Each RuvB hexamer is contacted by two RuvA subunits (via domain III) on 2 adjacent RuvB subunits; this complex drives branch migration. In the full resolvosome a probable DNA-RuvA(4)-RuvB(12)-RuvC(2) complex forms which resolves the HJ.

The protein localises to the cytoplasm. Its function is as follows. The RuvA-RuvB-RuvC complex processes Holliday junction (HJ) DNA during genetic recombination and DNA repair, while the RuvA-RuvB complex plays an important role in the rescue of blocked DNA replication forks via replication fork reversal (RFR). RuvA specifically binds to HJ cruciform DNA, conferring on it an open structure. The RuvB hexamer acts as an ATP-dependent pump, pulling dsDNA into and through the RuvAB complex. HJ branch migration allows RuvC to scan DNA until it finds its consensus sequence, where it cleaves and resolves the cruciform DNA. This Caulobacter sp. (strain K31) protein is Holliday junction branch migration complex subunit RuvA.